The primary structure comprises 927 residues: DNA-binding protein RFX6 (927 aa).

2 disordered regions span residues 1 to 21 (MAKV…PQLP) and 81 to 108 (NFSS…QKKS). The RFX-type winged-helix DNA-binding region spans 123–198 (TLQWLEDNYI…YHYYGIGIKE (76 aa)).

It belongs to the RFX family. Interacts with RFX3. As to expression, in the adult pancreas, expression is restricted to the islets where it could be detected in all endocrine lineages.

It is found in the nucleus. In terms of biological role, transcription factor required to direct islet cell differentiation during endocrine pancreas development. Specifically required for the differentiation of 4 of the 5 islet cell types and for the production of insulin. Not required for pancreatic PP (polypeptide-producing) cells differentiation. Acts downstream of NEUROG3 and regulates the transcription factors involved in beta-cell maturation and function, thereby restricting the expression of the beta-cell differentiation and specification genes, and thus the beta-cell fate choice. Activates transcription by forming a heterodimer with RFX3 and binding to the X-box in the promoter of target genes. Involved in glucose-stimulated insulin secretion by promoting insulin and L-type calcium channel gene transcription. The protein is DNA-binding protein RFX6 (Rfx6) of Mus musculus (Mouse).